The sequence spans 321 residues: Serine/threonine-protein phosphatase PP1 (321 aa).

Mn(2+) is bound by residues Asp-60, His-62, Asp-88, and Asn-120. His-121 (proton donor) is an active-site residue. Mn(2+) is bound by residues His-169 and His-244. The segment at 298–321 (KKLTNDSNGRPLTPPRNKQQKPKK) is disordered.

This sequence belongs to the PPP phosphatase family. In terms of assembly, interacts with dpiA. Mn(2+) is required as a cofactor.

The enzyme catalyses O-phospho-L-seryl-[protein] + H2O = L-seryl-[protein] + phosphate. It carries out the reaction O-phospho-L-threonyl-[protein] + H2O = L-threonyl-[protein] + phosphate. Its activity is regulated as follows. Inhibited by okadaic acid, tautomycin and calyculin A. Inhibited by phosphatase inhibitor 2 (dpiA). Protein phosphatase activity in vitro. In Dictyostelium discoideum (Social amoeba), this protein is Serine/threonine-protein phosphatase PP1 (pppB).